A 408-amino-acid chain; its full sequence is S-adenosylmethionine sensor upstream of mTORC1 (408 aa).

A compositionally biased stretch (low complexity) spans 1-16 (MEAAPRSRPRPGGAAA). Residues 1 to 37 (MEAAPRSRPRPGGAAASPPPPPPPPPPEQERKLEQEK) are disordered. Residues 17 to 27 (SPPPPPPPPPP) are compositionally biased toward pro residues. Basic and acidic residues predominate over residues 28–37 (EQERKLEQEK). The S-adenosyl-L-methionine site is built by Arg97, Gly175, Asp193, Asp205, Phe206, and Ser247.

The protein belongs to the BMT2/SAMTOR family. As to quaternary structure, interacts with the GATOR1 complex; interaction is disrupted when SAMTOR binds S-adenosyl-L-methionine. Interacts with the KICSTOR complex; interaction is disrupted when SAMTOR binds S-adenosyl-L-methionine.

Functionally, S-adenosyl-L-methionine-binding protein that acts as an inhibitor of mTORC1 signaling via interaction with the GATOR1 and KICSTOR complexes. Acts as a sensor of S-adenosyl-L-methionine to signal methionine sufficiency to mTORC1: in presence of methionine, binds S-adenosyl-L-methionine, leading to disrupt interaction with the GATOR1 and KICSTOR complexes and promote mTORC1 signaling. Upon methionine starvation, S-adenosyl-L-methionine levels are reduced, thereby promoting the association with GATOR1 and KICSTOR, leading to inhibit mTORC1 signaling. Probably also acts as a S-adenosyl-L-methionine-dependent methyltransferase. This Gallus gallus (Chicken) protein is S-adenosylmethionine sensor upstream of mTORC1.